The primary structure comprises 217 residues: MSDNRSRRIAKELADVQQDKQAGIQVWTINDDISHLKGMFRGPEGTPYEGGYFVVDIEIPIDYPFRPPKMNFDTKIYHPNVSSQTGAICLDILKDQWSPVYTMKSALISLQSLLCTPEPSNPQDAQVAQVYLQNYQQFVRTAREWTSSYAAAPAGVDLDAENTEFGGIDPNIITNLQQFGFSTELIVRVLQREHIKSQEDLKDYPNGINGILDQLLH.

The UBC core domain occupies 4–151 (NRSRRIAKEL…AREWTSSYAA (148 aa)). Cys89 serves as the catalytic Glycyl thioester intermediate.

It belongs to the ubiquitin-conjugating enzyme family.

It localises to the cytoplasm. The protein localises to the nucleus. It carries out the reaction S-ubiquitinyl-[E1 ubiquitin-activating enzyme]-L-cysteine + [E2 ubiquitin-conjugating enzyme]-L-cysteine = [E1 ubiquitin-activating enzyme]-L-cysteine + S-ubiquitinyl-[E2 ubiquitin-conjugating enzyme]-L-cysteine.. It functions in the pathway protein modification; protein ubiquitination. Its function is as follows. Catalyzes the covalent attachment of ubiquitin to other proteins. Functions in degradation of misfolded or regulated proteins localized in the endoplasmic reticulum (ER) lumen or membrane via the ubiquitin-proteasome system. Cognate E2 conjugating enzyme for the HRD1 ubiquitin ligase complex, which is part of the ERAD-L and ERAD-M pathways responsible for the rapid degradation of soluble lumenal and membrane proteins with misfolded lumenal domains (ERAD-L), or ER-membrane proteins with misfolded transmembrane domains (ERAD-M). The chain is Ubiquitin-conjugating enzyme E2 1 (ubc1) from Schizosaccharomyces pombe (strain 972 / ATCC 24843) (Fission yeast).